A 231-amino-acid polypeptide reads, in one-letter code: uncharacterized protein (231 aa).

10–34 lines the NADP(+) pocket; the sequence is IITGASSGIGAATAKALEKQGVKVV. Ser-140 serves as a coordination point for substrate. Tyr-153 functions as the Proton acceptor in the catalytic mechanism.

Belongs to the short-chain dehydrogenases/reductases (SDR) family.

This is an uncharacterized protein from Staphylococcus haemolyticus (strain JCSC1435).